Reading from the N-terminus, the 386-residue chain is N-acetylneuraminate epimerase (386 aa).

Residues 1–29 (MGMQMKNFKKMMTLMALCFSVAITTSGYA) form the signal peptide. Kelch repeat units lie at residues 51–95 (VIYV…VFLN), 97–149 (ELYV…VKLN), 151–186 (TMVL…KVIY), 187–232 (NYFN…VMGN), 235–284 (LMLI…LAGA), 306–355 (QNYT…SYGD), and 357–386 (VFLI…LLIK). Catalysis depends on glutamate 241, which acts as the Proton acceptor.

It belongs to the NanM family. Homodimer.

The protein resides in the periplasm. It carries out the reaction N-acetyl-alpha-neuraminate = N-acetyl-beta-neuraminate. Converts alpha-N-acetylneuranimic acid (Neu5Ac) to the beta-anomer, accelerating the equilibrium between the alpha- and beta-anomers. Probably facilitates sialidase-negative bacteria to compete successfully for limited amounts of extracellular Neu5Ac, which is likely taken up in the beta-anomer. In addition, the rapid removal of sialic acid from solution might be advantageous to the bacterium to damp down host responses. This is N-acetylneuraminate epimerase from Salmonella typhimurium (strain LT2 / SGSC1412 / ATCC 700720).